We begin with the raw amino-acid sequence, 99 residues long: Integration host factor subunit alpha (99 aa).

The segment at 49 to 75 is disordered; that stretch reads FGNFDLRDKNQRPGRNPKTGEDIPITA.

This sequence belongs to the bacterial histone-like protein family. In terms of assembly, heterodimer of an alpha and a beta chain.

Functionally, this protein is one of the two subunits of integration host factor, a specific DNA-binding protein that functions in genetic recombination as well as in transcriptional and translational control. The protein is Integration host factor subunit alpha of Salmonella arizonae (strain ATCC BAA-731 / CDC346-86 / RSK2980).